An 855-amino-acid chain; its full sequence is Protein translocase subunit SecA (855 aa).

ATP is bound by residues Q88, 106-110, and D509; that span reads GEGKT. A disordered region spans residues 815-837; the sequence is EANLQNKFEKKPARNEPCPCGSG. Positions 832, 834, 843, and 844 each coordinate Zn(2+).

Belongs to the SecA family. As to quaternary structure, monomer and homodimer. Part of the essential Sec protein translocation apparatus which comprises SecA, SecYEG and auxiliary proteins SecDF-YajC and YidC. Zn(2+) is required as a cofactor.

The protein resides in the cell inner membrane. Its subcellular location is the cytoplasm. It catalyses the reaction ATP + H2O + cellular proteinSide 1 = ADP + phosphate + cellular proteinSide 2.. Part of the Sec protein translocase complex. Interacts with the SecYEG preprotein conducting channel. Has a central role in coupling the hydrolysis of ATP to the transfer of proteins into and across the cell membrane, serving as an ATP-driven molecular motor driving the stepwise translocation of polypeptide chains across the membrane. The sequence is that of Protein translocase subunit SecA from Campylobacter fetus subsp. fetus (strain 82-40).